Here is a 119-residue protein sequence, read N- to C-terminus: Large ribosomal subunit protein uL18 (119 aa).

Residues methionine 1 to glycine 23 form a disordered region.

This sequence belongs to the universal ribosomal protein uL18 family. In terms of assembly, part of the 50S ribosomal subunit; part of the 5S rRNA/L5/L18/L25 subcomplex. Contacts the 5S and 23S rRNAs.

Functionally, this is one of the proteins that bind and probably mediate the attachment of the 5S RNA into the large ribosomal subunit, where it forms part of the central protuberance. This is Large ribosomal subunit protein uL18 from Chlorobium chlorochromatii (strain CaD3).